A 274-amino-acid polypeptide reads, in one-letter code: Diaminopimelate epimerase (274 aa).

Substrate-binding residues include asparagine 13, glutamine 45, and asparagine 63. Cysteine 72 serves as the catalytic Proton donor. Substrate is bound by residues 73–74, asparagine 158, asparagine 191, and 209–210; these read GN and ER. Cysteine 218 acts as the Proton acceptor in catalysis. Residue 219-220 participates in substrate binding; the sequence is GT.

It belongs to the diaminopimelate epimerase family. As to quaternary structure, homodimer.

The protein localises to the cytoplasm. It catalyses the reaction (2S,6S)-2,6-diaminopimelate = meso-2,6-diaminopimelate. The protein operates within amino-acid biosynthesis; L-lysine biosynthesis via DAP pathway; DL-2,6-diaminopimelate from LL-2,6-diaminopimelate: step 1/1. In terms of biological role, catalyzes the stereoinversion of LL-2,6-diaminopimelate (L,L-DAP) to meso-diaminopimelate (meso-DAP), a precursor of L-lysine and an essential component of the bacterial peptidoglycan. This Pelagibacter ubique (strain HTCC1062) protein is Diaminopimelate epimerase.